Reading from the N-terminus, the 521-residue chain is Feruloyl esterase B (521 aa).

Positions 1–17 are cleaved as a signal peptide; sequence MKVASLLSLALPGAALA. 2 disulfides stabilise this stretch: Cys-26–Cys-72 and Cys-61–Cys-111. Asn-37, Asn-51, Asn-77, Asn-95, Asn-144, and Asn-177 each carry an N-linked (GlcNAc...) asparagine glycan. 3 cysteine pairs are disulfide-bonded: Cys-184–Cys-438, Cys-253–Cys-270, and Cys-279–Cys-288. The active-site Acyl-ester intermediate is the Ser-185. The Ca(2+) site is built by Asp-254, Asp-257, Ala-259, Asp-261, and Ile-263. Residues Asn-284, Asn-347, Asn-352, and Asn-378 are each glycosylated (N-linked (GlcNAc...) asparagine). Catalysis depends on charge relay system residues Asp-397 and His-437. N-linked (GlcNAc...) asparagine glycans are attached at residues Asn-488 and Asn-511. Residues Cys-498 and Cys-520 are joined by a disulfide bond.

It belongs to the tannase family. Homodimer. Glycosylated.

The protein localises to the secreted. It carries out the reaction feruloyl-polysaccharide + H2O = ferulate + polysaccharide.. With respect to regulation, inhibited by the specific serine esterase inhibitor AEBSF. In terms of biological role, involved in degradation of plant cell walls. Hydrolyzes of the feruloyl-arabinose ester bond in arabinoxylans as well as the feruloyl-galactose and feruloyl-arabinose ester bonds in pectin. The sequence is that of Feruloyl esterase B (faeB) from Aspergillus niger.